The sequence spans 765 residues: Dipeptidyl peptidase 4 (765 aa).

The Cytoplasmic portion of the chain corresponds to 1-6; that stretch reads MKTPWK. A helical; Signal-anchor for type II membrane protein membrane pass occupies residues 7 to 29; it reads VLLGLLGLAALITIITVPVVLLN. Residues 30 to 765 lie on the Extracellular side of the membrane; the sequence is KGNDAAADSR…HFIKQCFSLP (736 aa). Residues asparagine 84, asparagine 91, asparagine 149, asparagine 178, asparagine 228, asparagine 280, asparagine 320, asparagine 330, and asparagine 331 are each glycosylated (N-linked (GlcNAc...) asparagine). 3 cysteine pairs are disulfide-bonded: cysteine 384–cysteine 393, cysteine 443–cysteine 446, and cysteine 453–cysteine 471. A glycan (N-linked (GlcNAc...) asparagine) is linked at asparagine 519. Catalysis depends on serine 629, which acts as the Charge relay system. Residues cysteine 648 and cysteine 761 are joined by a disulfide bond. N-linked (GlcNAc...) asparagine glycosylation is present at asparagine 684. Catalysis depends on charge relay system residues aspartate 707 and histidine 739.

This sequence belongs to the peptidase S9B family. DPPIV subfamily. As to quaternary structure, monomer. Homodimer. Heterodimer with Seprase (FAP). Requires homodimerization for optimal dipeptidyl peptidase activity and T-cell costimulation. Found in a membrane raft complex, at least composed of BCL10, CARD11, DPP4 and IKBKB. Associates with collagen. Interacts with PTPRC; the interaction is enhanced in an interleukin-12-dependent manner in activated lymphocytes. Interacts (extracellular domain) with ADA; does not inhibit its dipeptidyl peptidase activity. Interacts with CAV1 (via the N-terminus); the interaction is direct. Interacts (via cytoplasmic tail) with CARD11 (via PDZ domain); its homodimerization is necessary for interaction with CARD11. Interacts with IGF2R; the interaction is direct. Interacts with GPC3. The soluble form (Dipeptidyl peptidase 4 soluble form also named SDPP) derives from the membrane form (Dipeptidyl peptidase 4 membrane form also named MDPP) by proteolytic processing. Post-translationally, N- and O-Glycosylated. In terms of processing, phosphorylated. Mannose 6-phosphate residues in the carbohydrate moiety are necessary for interaction with IGF2R in activated T-cells. Mannose 6-phosphorylation is induced during T-cell activation.

The protein resides in the secreted. The protein localises to the cell membrane. It is found in the apical cell membrane. It localises to the cell projection. Its subcellular location is the invadopodium membrane. The protein resides in the lamellipodium membrane. The protein localises to the cell junction. It is found in the membrane raft. It carries out the reaction Release of an N-terminal dipeptide, Xaa-Yaa-|-Zaa-, from a polypeptide, preferentially when Yaa is Pro, provided Zaa is neither Pro nor hydroxyproline.. Its activity is regulated as follows. Inhibited by GPC3 and diprotin A. Cell surface glycoprotein receptor involved in the costimulatory signal essential for T-cell receptor (TCR)-mediated T-cell activation. Acts as a positive regulator of T-cell coactivation, by binding at least ADA, CAV1, IGF2R, and PTPRC. Its binding to CAV1 and CARD11 induces T-cell proliferation and NF-kappa-B activation in a T-cell receptor/CD3-dependent manner. Its interaction with ADA also regulates lymphocyte-epithelial cell adhesion. In association with FAP is involved in the pericellular proteolysis of the extracellular matrix (ECM), the migration and invasion of endothelial cells into the ECM. May be involved in the promotion of lymphatic endothelial cells adhesion, migration and tube formation. When overexpressed, enhanced cell proliferation, a process inhibited by GPC3. Also acts as a serine exopeptidase with a dipeptidyl peptidase activity that regulates various physiological processes by cleaving peptides in the circulation, including many chemokines, mitogenic growth factors, neuropeptides and peptide hormones. Removes N-terminal dipeptides sequentially from polypeptides having unsubstituted N-termini provided that the penultimate residue is proline. The polypeptide is Dipeptidyl peptidase 4 (DPP4) (Felis catus (Cat)).